The chain runs to 189 residues: UPF0301 protein RP032 (189 aa).

This sequence belongs to the UPF0301 (AlgH) family.

This is UPF0301 protein RP032 from Rickettsia prowazekii (strain Madrid E).